Reading from the N-terminus, the 168-residue chain is G/U mismatch-specific DNA glycosylase (168 aa).

Belongs to the uracil-DNA glycosylase (UDG) superfamily. TDG/mug family. In terms of assembly, binds DNA as a monomer.

Its subcellular location is the cytoplasm. The catalysed reaction is Specifically hydrolyzes mismatched double-stranded DNA and polynucleotides, releasing free uracil.. Its function is as follows. Excises ethenocytosine and uracil, which can arise by alkylation or deamination of cytosine, respectively, from the corresponding mispairs with guanine in ds-DNA. It is capable of hydrolyzing the carbon-nitrogen bond between the sugar-phosphate backbone of the DNA and the mispaired base. The complementary strand guanine functions in substrate recognition. Required for DNA damage lesion repair in stationary-phase cells. In Escherichia coli O9:H4 (strain HS), this protein is G/U mismatch-specific DNA glycosylase.